Consider the following 155-residue polypeptide: RNA pyrophosphohydrolase (155 aa).

The Nudix hydrolase domain occupies 5-147 (KYRPNVAAII…KRQVYRQVIA (143 aa)). The Nudix box signature appears at 42–63 (GGIDEGETPLEALYRELLEEIG).

It belongs to the Nudix hydrolase family. RppH subfamily. A divalent metal cation serves as cofactor.

Functionally, accelerates the degradation of transcripts by removing pyrophosphate from the 5'-end of triphosphorylated RNA, leading to a more labile monophosphorylated state that can stimulate subsequent ribonuclease cleavage. In Helicobacter pylori (strain P12), this protein is RNA pyrophosphohydrolase.